Reading from the N-terminus, the 62-residue chain is Large ribosomal subunit protein eL24 (62 aa).

Positions 6, 9, 32, and 36 each coordinate Zn(2+). The C4-type zinc finger occupies 6–36 (CSFCEGTIEPGCGKKYVKKDGSVMHFCSSKC).

Belongs to the eukaryotic ribosomal protein eL24 family. Part of the 50S ribosomal subunit. Forms a cluster with proteins L3 and L14. The cofactor is Zn(2+).

Its function is as follows. Binds to the 23S rRNA. In Methanococcus maripaludis (strain C7 / ATCC BAA-1331), this protein is Large ribosomal subunit protein eL24.